The chain runs to 488 residues: 3-octaprenyl-4-hydroxybenzoate carboxy-lyase (488 aa).

Asn172 contributes to the Mn(2+) binding site. Prenylated FMN is bound by residues 175–177, 189–191, and 194–195; these read IYR, RWL, and RG. Glu238 contacts Mn(2+). Asp287 functions as the Proton donor in the catalytic mechanism.

This sequence belongs to the UbiD family. In terms of assembly, homohexamer. Prenylated FMN serves as cofactor. Requires Mn(2+) as cofactor.

It localises to the cell membrane. It catalyses the reaction a 4-hydroxy-3-(all-trans-polyprenyl)benzoate + H(+) = a 2-(all-trans-polyprenyl)phenol + CO2. The protein operates within cofactor biosynthesis; ubiquinone biosynthesis. Its function is as follows. Catalyzes the decarboxylation of 3-octaprenyl-4-hydroxy benzoate to 2-octaprenylphenol, an intermediate step in ubiquinone biosynthesis. The protein is 3-octaprenyl-4-hydroxybenzoate carboxy-lyase of Halorhodospira halophila (strain DSM 244 / SL1) (Ectothiorhodospira halophila (strain DSM 244 / SL1)).